The primary structure comprises 279 residues: MISGSPPDSTPSHHHFSLKRPCILLTNDDGVNSEGLWAAYDALFEWADVVVCAPATQQSAVGRSLSIFEPLRVNTVSRGDITAYAVGGKPTDSVILALFALGVKPDLVVSGINIGENLSYEAITTSGTVGAALEAANHGYPAVAFSLQIEDQKEKFDDARHLADRFSESKGVVRDVIRRILEKGFPSFTHVMNVNIPSIITGGYEITHLAEHLFITGVEKRLDPRGKPYYWINGPLVTDAPEGTDVHAIHKGNISITPITLDCTAYAGTDDLRRLFSLE.

Residues aspartate 28, aspartate 29, serine 59, and asparagine 113 each coordinate a divalent metal cation.

The protein belongs to the SurE nucleotidase family. It depends on a divalent metal cation as a cofactor.

The protein resides in the cytoplasm. The catalysed reaction is a ribonucleoside 5'-phosphate + H2O = a ribonucleoside + phosphate. Functionally, nucleotidase that shows phosphatase activity on nucleoside 5'-monophosphates. In Methanospirillum hungatei JF-1 (strain ATCC 27890 / DSM 864 / NBRC 100397 / JF-1), this protein is 5'-nucleotidase SurE.